The sequence spans 51 residues: UPF0181 protein VVA0806 (51 aa).

It belongs to the UPF0181 family.

This chain is UPF0181 protein VVA0806, found in Vibrio vulnificus (strain YJ016).